The primary structure comprises 218 residues: Claudin-3 (218 aa).

Topologically, residues 1-8 (MSMGLEIA) are cytoplasmic. The helical transmembrane segment at 9 to 29 (GTSLAVLGWLSTIVCCALPMW) threads the bilayer. The Extracellular segment spans residues 30–80 (RVTAFIGSSIITAQITWEGLWMNCVVQSTGQMQCKVYDSLLALPQDLQAAR). Residues 81 to 101 (ALIVVSILLAAFGLLVALVGA) traverse the membrane as a helical segment. Residues 102 to 115 (QCTNCVQDDTAKAK) are Cytoplasmic-facing. The helical transmembrane segment at 116-136 (ITIVAGVLFLLAALLTLVPVS) threads the bilayer. The Extracellular segment spans residues 137–159 (WSANTIIRDFYNPLVPDAQKREM). The helical transmembrane segment at 160–180 (GAGLYVGWAAAALQLLGGALL) threads the bilayer. Residues 181–218 (CCSCPPRDKKYAPTKIVYSAPRSAGPGTSTAYDRKDYV) lie on the Cytoplasmic side of the membrane. Tyr198 is modified (phosphotyrosine). Phosphoserine occurs at positions 199 and 209. Residues 217–218 (YV) form an interactions with TJP1, TJP2 and TJP3 region.

Belongs to the claudin family. Can form homo- and heteropolymers with other CLDN. Homopolymers interact with CLDN1 and CLDN2 homopolymers. Interacts in cis (within the same plasma membrane) with CLDN19. Directly interacts with TJP1/ZO-1, TJP2/ZO-2 and TJP3/ZO-3.

It is found in the cell junction. Its subcellular location is the tight junction. It localises to the cell membrane. In terms of biological role, plays a major role in tight junction-specific obliteration of the intercellular space, through calcium-independent cell-adhesion activity. In Canis lupus familiaris (Dog), this protein is Claudin-3 (CLDN3).